The chain runs to 572 residues: Glutamate--tRNA ligase (572 aa).

Residues 112–122 (PNPNGPPSLGN) carry the 'HIGH' region motif.

The protein belongs to the class-I aminoacyl-tRNA synthetase family. Glutamate--tRNA ligase type 2 subfamily.

The protein resides in the cytoplasm. The catalysed reaction is tRNA(Glu) + L-glutamate + ATP = L-glutamyl-tRNA(Glu) + AMP + diphosphate. Its function is as follows. Catalyzes the attachment of glutamate to tRNA(Glu) in a two-step reaction: glutamate is first activated by ATP to form Glu-AMP and then transferred to the acceptor end of tRNA(Glu). This chain is Glutamate--tRNA ligase, found in Methanocella arvoryzae (strain DSM 22066 / NBRC 105507 / MRE50).